The chain runs to 437 residues: Epsilon-sarcoglycan (437 aa).

Residues 1-317 (MQLPRWWELG…LKSRDYYTDF (317 aa)) are Extracellular-facing. An N-linked (GlcNAc...) asparagine glycan is attached at Asn200. A helical membrane pass occupies residues 318–338 (LITLAVPSAVALVLFLILAYI). Residues 339-437 (MCCRREGVEK…QQQTTGKWYP (99 aa)) lie on the Cytoplasmic side of the membrane.

This sequence belongs to the sarcoglycan alpha/epsilon family. In terms of processing, N-glycosylated. Post-translationally, ubiquitinated, leading to its degradation by the proteasome.

The protein localises to the cell membrane. It localises to the sarcolemma. The protein resides in the cytoplasm. Its subcellular location is the cytoskeleton. It is found in the cell projection. The protein localises to the dendrite. It localises to the golgi apparatus. Component of the sarcoglycan complex, a subcomplex of the dystrophin-glycoprotein complex which forms a link between the F-actin cytoskeleton and the extracellular matrix. This is Epsilon-sarcoglycan from Pongo abelii (Sumatran orangutan).